Here is a 606-residue protein sequence, read N- to C-terminus: Pro-secreted protein ORF2 (606 aa).

The signal sequence occupies residues 1–19 (MSLCRLLLMLAMCCGVSRG). Residues 22 to 54 (TLPAGGRRGQRRRDNSAQWSTQQRPEGAVGPAP) form a disordered region. A Nuclear localization signal motif is present at residues 28–34 (RRGQRRR). A glycan (N-linked (GlcNAc...) asparagine; by host) is linked at N255. Residues 313-339 (ILGVLFNLADTVLGGLPSTLLRAASGQ) are particle formation. Residue N510 is glycosylated (N-linked (GlcNAc...) asparagine; by host).

This sequence belongs to the hepevirus capsid protein family. As to quaternary structure, homodimer. Self-assembles to form the capsid. The capsid is dominated by dimers that define the 30 morphological units. Interacts with phosphorylated protein ORF3. Post-translationally, N-glycosylated.

Its subcellular location is the secreted. The protein resides in the virion. It is found in the host cytoplasm. The protein localises to the host endoplasmic reticulum. It localises to the host Golgi apparatus. Its subcellular location is the host cell surface. The protein resides in the host nucleus. Functionally, plays a role in the inhibition of host antibody-mediated neutralization without blocking viral cell entry. In terms of biological role, forms an icosahedral capsid with a T=1 symmetry and a 34 nm diameter. The capsid is composed of 60 copies linked to each other. Binds to the 5' end of the genomic RNA to mediate genome encapsidation. The chain is Pro-secreted protein ORF2 from Gallus gallus (Chicken).